An 818-amino-acid polypeptide reads, in one-letter code: Response regulator SSK1 (818 aa).

Positions 611–769 constitute a Response regulatory domain; sequence NVLIVEDNPI…WLERKVMEWG (159 aa). Position 660 is a 4-aspartylphosphate (Asp-660).

It belongs to the SSK1 family.

It is found in the cytoplasm. Its function is as follows. Two-domain response regulator protein in the two-component signal transduction system of the HOG1 pathway. Modulates stress response, melanin biosynthesis and virulence via its regulation of the phosphorylation of HOG1. The polypeptide is Response regulator SSK1 (Verticillium dahliae (strain VdLs.17 / ATCC MYA-4575 / FGSC 10137) (Verticillium wilt)).